We begin with the raw amino-acid sequence, 367 residues long: Germination protease (367 aa).

Residues 1-13 (MEEQQIPFQVRTD) constitute a propeptide that is removed on maturation. Residues 267 to 287 (KDDPSKSLTPAGMSFGNRKLT) are disordered.

The protein belongs to the peptidase A25 family. Homotetramer. In terms of processing, autoproteolytically processed. The inactive tetrameric zymogen termed p46 autoprocesses to a smaller form termed p41, which is active only during spore germination.

The catalysed reaction is Endopeptidase action with P4 Glu or Asp, P1 preferably Glu &gt; Asp, P1' hydrophobic and P2' Ala.. Initiates the rapid degradation of small, acid-soluble proteins during spore germination. This Oceanobacillus iheyensis (strain DSM 14371 / CIP 107618 / JCM 11309 / KCTC 3954 / HTE831) protein is Germination protease.